Here is a 460-residue protein sequence, read N- to C-terminus: Bifunctional protein GlmU (460 aa).

The pyrophosphorylase stretch occupies residues 1-229; that stretch reads MSHYAIILAA…FEESLGVNDR (229 aa). UDP-N-acetyl-alpha-D-glucosamine-binding positions include 8–11, Lys-22, Gln-72, and 77–78; these read LAAG and GT. Asp-102 is a binding site for Mg(2+). Residues Gly-139, Glu-154, Asn-169, and Asn-227 each coordinate UDP-N-acetyl-alpha-D-glucosamine. Position 227 (Asn-227) interacts with Mg(2+). A linker region spans residues 230–250; it reads VALATAEDVMRRRINKAHMIN. The segment at 251-460 is N-acetyltransferase; sequence GVTFQNPNAT…KKPHHPSQQK (210 aa). The UDP-N-acetyl-alpha-D-glucosamine site is built by Arg-332 and Lys-350. His-362 functions as the Proton acceptor in the catalytic mechanism. 2 residues coordinate UDP-N-acetyl-alpha-D-glucosamine: Tyr-365 and Asn-376. Residues Ala-379, 385–386, Ser-404, Ala-422, and Arg-439 contribute to the acetyl-CoA site; that span reads NY.

It in the N-terminal section; belongs to the N-acetylglucosamine-1-phosphate uridyltransferase family. The protein in the C-terminal section; belongs to the transferase hexapeptide repeat family. In terms of assembly, homotrimer. Mg(2+) is required as a cofactor.

It localises to the cytoplasm. It catalyses the reaction alpha-D-glucosamine 1-phosphate + acetyl-CoA = N-acetyl-alpha-D-glucosamine 1-phosphate + CoA + H(+). The enzyme catalyses N-acetyl-alpha-D-glucosamine 1-phosphate + UTP + H(+) = UDP-N-acetyl-alpha-D-glucosamine + diphosphate. The protein operates within nucleotide-sugar biosynthesis; UDP-N-acetyl-alpha-D-glucosamine biosynthesis; N-acetyl-alpha-D-glucosamine 1-phosphate from alpha-D-glucosamine 6-phosphate (route II): step 2/2. It functions in the pathway nucleotide-sugar biosynthesis; UDP-N-acetyl-alpha-D-glucosamine biosynthesis; UDP-N-acetyl-alpha-D-glucosamine from N-acetyl-alpha-D-glucosamine 1-phosphate: step 1/1. Its pathway is bacterial outer membrane biogenesis; LPS lipid A biosynthesis. Its function is as follows. Catalyzes the last two sequential reactions in the de novo biosynthetic pathway for UDP-N-acetylglucosamine (UDP-GlcNAc). The C-terminal domain catalyzes the transfer of acetyl group from acetyl coenzyme A to glucosamine-1-phosphate (GlcN-1-P) to produce N-acetylglucosamine-1-phosphate (GlcNAc-1-P), which is converted into UDP-GlcNAc by the transfer of uridine 5-monophosphate (from uridine 5-triphosphate), a reaction catalyzed by the N-terminal domain. The chain is Bifunctional protein GlmU from Streptococcus thermophilus (strain CNRZ 1066).